Here is a 447-residue protein sequence, read N- to C-terminus: N-succinylarginine dihydrolase (447 aa).

Substrate is bound by residues A19–S28, N110, and H137–R138. E174 is an active-site residue. R212 contacts substrate. H248 is an active-site residue. 2 residues coordinate substrate: D250 and N359. Residue C365 is the Nucleophile of the active site.

Belongs to the succinylarginine dihydrolase family. Homodimer.

It catalyses the reaction N(2)-succinyl-L-arginine + 2 H2O + 2 H(+) = N(2)-succinyl-L-ornithine + 2 NH4(+) + CO2. Its pathway is amino-acid degradation; L-arginine degradation via AST pathway; L-glutamate and succinate from L-arginine: step 2/5. In terms of biological role, catalyzes the hydrolysis of N(2)-succinylarginine into N(2)-succinylornithine, ammonia and CO(2). The polypeptide is N-succinylarginine dihydrolase (Shigella boydii serotype 4 (strain Sb227)).